The following is a 2376-amino-acid chain: Serine/threonine-protein kinase WNK1 (2376 aa).

2 disordered regions span residues 1–78 and 93–201; these read MSGG…EHRF and ELPG…QQDD. 2 stretches are compositionally biased toward low complexity: residues 10–19 and 40–49; these read SSPPGSLFLS and GAAAADAGAG. A phosphoserine mark is found at serine 15 and serine 19. A compositionally biased stretch (basic and acidic residues) spans 50-66; that stretch reads RTEEYRRRRHTMDKDSR. Threonine 60 is modified (phosphothreonine). Over residues 125-158 the composition is skewed to low complexity; the sequence is TPAVAHVAQQPPAAATPGEPAAAVPAAASAPGSA. Position 172 is a phosphoserine (serine 172). In terms of domain architecture, Protein kinase spans 219 to 477; it reads LKFDIEIGRG…IKDLLNHAFF (259 aa). ATP is bound at residue serine 229. The chloride site is built by phenylalanine 281 and leucine 297. Residues 299–302 and lysine 349 each bind ATP; that span reads TELM. Residue aspartate 366 is the Proton acceptor of the active site. Chloride contacts are provided by leucine 367 and leucine 369. A phosphoserine; by autocatalysis mark is found at serine 376 and serine 380. The segment at 486 to 553 is autoinhibitory domain; it reads ELAEEDDGEK…VCEGDHKTMA (68 aa). Residues 571 to 586 show a composition bias toward basic and acidic residues; it reads QLVREEQEKRKQEESS. 3 disordered regions span residues 571–641, 701–799, and 1026–1118; these read QLVR…QLQY, AQPH…PVPT, and TTSS…SRPK. Composition is skewed to low complexity over residues 587–601 and 614–624; these read LKQQGEQQSSASQAG and AAATTSASVST. Residues 627 to 637 form an interaction with KLHL3 region; the sequence is EPEEPEADQHQ. Low complexity predominate over residues 708–752; sequence PPSSMAQGQSQGQPSSSSLTGIPSSQPVQHSQQQQGVQQTAPSQQ. Polar residues predominate over residues 753–766; sequence TVQYSLPQTSAPSE. A compositionally biased stretch (pro residues) spans 1045 to 1057; that stretch reads PPEPVPAAPPQPT. A compositionally biased stretch (polar residues) spans 1079 to 1089; that stretch reads SDGNENVPSSS. Positions 1097-1118 are enriched in basic residues; the sequence is IKRHYRKSVRSRSRHEKTSRPK. An RFXV motif 1 motif is present at residues 1257 to 1260; that stretch reads RFIV. Serine 1261 carries the phosphoserine modification. Disordered stretches follow at residues 1459-1478 and 1734-1770; these read STAAPGAKPPPVSSQQVSGS and STIPAVKPGTAPSKPPSTKPPVLPLGTELPAGTPPSE. Over residues 1746 to 1756 the composition is skewed to pro residues; that stretch reads SKPPSTKPPVL. The RFXV motif 2 signature appears at 1853–1856; the sequence is RFQV. A compositionally biased stretch (basic and acidic residues) spans 1862 to 1878; that stretch reads DTQKEGKNKSEDVKSVH. The tract at residues 1862–1942 is disordered; the sequence is DTQKEGKNKS…QPTKVGRFQV (81 aa). Low complexity predominate over residues 1881 to 1899; it reads SSTSESSVLSSSSPESTLV. Short sequence motifs (RFXV motif) lie at residues 1939–1942 and 1951–1954; these read RFQV and RFSV. Phosphoserine occurs at positions 1972, 1996, 2005, 2006, 2021, 2023, and 2026. 2 disordered regions span residues 1991-2033 and 2110-2239; these read EKPE…LCSK and AAAP…RKGT. Residues 2116 to 2128 show a composition bias toward basic residues; it reads GRRRRPTKSKGSK. Residues 2129 to 2141 are compositionally biased toward low complexity; the sequence is SSRSSSLGNKSPG. Composition is skewed to polar residues over residues 2146 to 2161 and 2169 to 2193; these read LSGQSTATVLHPQQTL and ETGQNQLLQPLKPSPSSDNLYSAFT. Positions 2207-2223 are enriched in low complexity; that stretch reads GQGTSSTNTVGGTVSSQ. Over residues 2224–2238 the composition is skewed to polar residues; it reads AAQAQPPTMTSSRKG. The interval 2235–2255 is amphipathic alpha-helix; the sequence is SRKGTFTDDLHKLVDNWARDA. A phosphoserine mark is found at serine 2264, serine 2280, serine 2364, and serine 2366.

Belongs to the protein kinase superfamily. Ser/Thr protein kinase family. WNK subfamily. As to quaternary structure, interacts with WNK3. Interacts with WNK4; inhibiting the activity of WNK4. Interacts with SGK1; promoting its activation. Associates with the mTORC2 complex. Interacts with UVRAG. Interacts (via amphipathic alpha-helix region) with EMC2; promoting the ER membrane protein complex assembly. Mg(2+) serves as cofactor. Autophosphorylated at Ser-376 and Ser-380, promoting its activity. Autophosphorylation at Ser-380 is inhibited by intracellular calcium. Phosphorylation at Thr-60 increases ability to activate SGK1. Post-translationally, ubiquitinated by the BCR(KLHL3) complex, leading to its degradation. Also ubiquitinated by the BCR(KLHL2) complex.

It localises to the cytoplasm. The protein resides in the nucleus. It is found in the cytoskeleton. The protein localises to the spindle. The enzyme catalyses L-seryl-[protein] + ATP = O-phospho-L-seryl-[protein] + ADP + H(+). It catalyses the reaction L-threonyl-[protein] + ATP = O-phospho-L-threonyl-[protein] + ADP + H(+). Activated in response to hyperosmotic stress: cell shrinkage promotes formation of a membraneless compartment that concentrates WNK1 with its substrates, OXSR1/OSR1 and STK39/SPAK. Activation requires autophosphorylation of Ser-380 and, to a lower extent, Ser-376. Autophosphorylation and subsequent activation is inhibited by increases in intracellular ionic strength: Cl(-) potently inhibits WNK1 kinase activity via direct binding. Also inhibited by K(+) ions. Functionally, serine/threonine-protein kinase component of the WNK1-SPAK/OSR1 kinase cascade, which acts as a key regulator of blood pressure and regulatory volume increase by promoting ion influx. WNK1 mediates regulatory volume increase in response to hyperosmotic stress by acting as a molecular crowding sensor, which senses cell shrinkage and mediates formation of a membraneless compartment by undergoing liquid-liquid phase separation. The membraneless compartment concentrates WNK1 with its substrates, OXSR1/OSR1 and STK39/SPAK, promoting WNK1-dependent phosphorylation and activation of downstream kinases OXSR1/OSR1 and STK39/SPAK. Following activation, OXSR1/OSR1 and STK39/SPAK catalyze phosphorylation of ion cotransporters SLC12A1/NKCC2, SLC12A2/NKCC1, SLC12A5/KCC2 and SLC12A6/KCC3, regulating their activity. Phosphorylation of Na-K-Cl cotransporters SLC12A2/NKCC1 and SLC12A2/NKCC1 promote their activation and ion influx; simultaneously, phosphorylation of K-Cl cotransporters SLC12A5/KCC2 and SLC12A6/KCC3 inhibit their activity, blocking ion efflux. Also acts as a regulator of angiogenesis in endothelial cells via activation of OXSR1/OSR1 and STK39/SPAK: activation of OXSR1/OSR1 regulates chemotaxis and invasion, while STK39/SPAK regulates endothelial cell proliferation. Also acts independently of the WNK1-SPAK/OSR1 kinase cascade by catalyzing phosphorylation of other substrates, such as SYT2, PCF11 and NEDD4L. Mediates phosphorylation of SYT2, regulating SYT2 association with phospholipids and membrane-binding. Regulates mRNA export in the nucleus by mediating phosphorylation of PCF11, thereby decreasing the association between PCF11 and POLR2A/RNA polymerase II and promoting mRNA export to the cytoplasm. Acts as a negative regulator of autophagy. Required for the abscission step during mitosis, independently of the WNK1-SPAK/OSR1 kinase cascade. May also play a role in actin cytoskeletal reorganization. Also acts as a scaffold protein independently of its protein kinase activity: negatively regulates cell membrane localization of various transporters and channels, such as SLC4A4, SLC26A6, SLC26A9, TRPV4 and CFTR. Involved in the regulation of epithelial Na(+) channel (ENaC) by promoting activation of SGK1 in a kinase-independent manner: probably acts as a scaffold protein that promotes the recruitment of SGK1 to the mTORC2 complex in response to chloride, leading to mTORC2-dependent phosphorylation and activation of SGK1. Acts as an assembly factor for the ER membrane protein complex independently of its protein kinase activity: associates with EMC2 in the cytoplasm via its amphipathic alpha-helix, and prevents EMC2 ubiquitination and subsequent degradation, thereby promoting EMC2 stabilization. This is Serine/threonine-protein kinase WNK1 from Sus scrofa (Pig).